The chain runs to 485 residues: E3 ubiquitin-protein ligase TRIM34A (485 aa).

The segment at 15-59 (CPVCQELLTKALSLGCGHRVCQACLITKKNAVINPREKSSCPVCG) adopts an RING-type zinc-finger fold. The B box-type zinc finger occupies 91 to 132 (TKRDLCVHHGEKLLLFCKEDKKAICWVCERSQEHRGHHTFLW). Residues Cys96, His99, Cys118, and His124 each coordinate Zn(2+). Positions 136–170 (VRECQENLQKALTRLRKEQEKVETLEADIKEDRLS) form a coiled coil. The 204-residue stretch at 282 to 485 (LSGMLQKFRE…APMTLCPLNS (204 aa)) folds into the B30.2/SPRY domain.

Belongs to the TRIM/RBCC family. Homotrimer. Interacts (via B-box and SPRY domain) with TRIM5.

The protein localises to the cytoplasm. It is found in the mitochondrion. It carries out the reaction S-ubiquitinyl-[E2 ubiquitin-conjugating enzyme]-L-cysteine + [acceptor protein]-L-lysine = [E2 ubiquitin-conjugating enzyme]-L-cysteine + N(6)-ubiquitinyl-[acceptor protein]-L-lysine.. Its pathway is protein modification; protein ubiquitination. Functions as antiviral protein and contributes to the defense against retroviral infections. Acts as a capsid-specific restriction factor with the help of TRIM5 and prevents infection from non-host-adapted retroviruses. During influenza A virus infection, promotes programmed cell death by targeting ZBP1 for 'Lys-63'-linked polyubiquitination. In turn, promotes ZBP1 recruitment of RIPK3 to mediate virus-induced programmed necrosis. Negatively regulates the function of mitochondria by enhancing mitochondrial depolarization leading to cytochrome c release and mitochondria-dependent apoptosis. Also promotes the formation of multinucleated giant cells by means of cell fusion and phagocytosis in epithelial cells. Plays an essential role in sustaining the integrity of the inner mucus layer in the colon by controlling the exocytosis of the major component of colonic mucus MUC2 from colonic goblet cells. The polypeptide is E3 ubiquitin-protein ligase TRIM34A (Mus musculus (Mouse)).